The sequence spans 177 residues: Dual-action ribosomal maturation protein DarP (177 aa).

This sequence belongs to the DarP family.

Its subcellular location is the cytoplasm. Functionally, member of a network of 50S ribosomal subunit biogenesis factors which assembles along the 30S-50S interface, preventing incorrect 23S rRNA structures from forming. Promotes peptidyl transferase center (PTC) maturation. This Histophilus somni (strain 2336) (Haemophilus somnus) protein is Dual-action ribosomal maturation protein DarP.